Here is an 876-residue protein sequence, read N- to C-terminus: Exonuclease mut-7 homolog (876 aa).

Residues 517–571 form the 3'-5' exonuclease domain; that stretch reads GLSLLVQQVLGTALDKTQQLSNWDRRPLCEEQVIYAAADAYCLLEVHQALCREPA. Disordered regions lie at residues 578–607 and 751–781; these read DLAG…APAA and SHQE…AAPE.

This sequence belongs to the mut-7 family. Mg(2+) serves as cofactor.

Its function is as follows. Possesses 3'-5' exoribonuclease activity. Required for 3'-end trimming of AGO1-bound miRNAs. The protein is Exonuclease mut-7 homolog (EXD3) of Homo sapiens (Human).